The chain runs to 156 residues: Small ribosomal subunit protein uS7 (156 aa).

It belongs to the universal ribosomal protein uS7 family. Part of the 30S ribosomal subunit. Contacts proteins S9 and S11.

Its function is as follows. One of the primary rRNA binding proteins, it binds directly to 16S rRNA where it nucleates assembly of the head domain of the 30S subunit. Is located at the subunit interface close to the decoding center, probably blocks exit of the E-site tRNA. This Azoarcus sp. (strain BH72) protein is Small ribosomal subunit protein uS7.